The primary structure comprises 91 residues: UPF0298 protein spyM18_0447 (91 aa).

It belongs to the UPF0298 family.

The protein resides in the cytoplasm. The polypeptide is UPF0298 protein spyM18_0447 (Streptococcus pyogenes serotype M18 (strain MGAS8232)).